Consider the following 114-residue polypeptide: GGSGGSGSSGNFTTASNIHMSSVTNTSIAGTGGTGGTGTGTGTGTGTGTGTGTGTGTGTDTGTGTGTGTETGTGTGTGTRNGTNSGTKTGTASSYRGGGVAIQPVTLTESLLNK.

The disordered stretch occupies residues 23–114 (VTNTSIAGTG…VTLTESLLNK (92 aa)). 14 repeat units span residues 30 to 31 (GT), 33 to 34 (GT), 36 to 37 (GT), 38 to 39 (GT), 40 to 41 (GT), 42 to 43 (GT), 44 to 45 (GT), 46 to 47 (GT), 48 to 49 (GT), 50 to 51 (GT), 52 to 53 (GT), 54 to 55 (GT), 56 to 57 (GT), and 58 to 59 (GT). A compositionally biased stretch (gly residues) spans 30-79 (GTGGTGGTGTGTGTGTGTGTGTGTGTGTGTDTGTGTGTGTETGTGTGTGT). Positions 30–87 (GTGGTGGTGTGTGTGTGTGTGTGTGTGTGTDTGTGTGTGTETGTGTGTGTRNGTNSGT) are 28 X 2 AA approximate tandem repeats of G-[TN]. The 15; approximate repeat unit spans residues 60–61 (DT). Repeat copies occupy residues 62 to 63 (GT), 64 to 65 (GT), 66 to 67 (GT), and 68 to 69 (GT). The 20; approximate repeat unit spans residues 70–71 (ET). Repeat copies occupy residues 72-73 (GT), 74-75 (GT), 76-77 (GT), and 78-79 (GT). One copy of the 25; approximate repeat lies at 80–81 (RN). Residues 80–91 (RNGTNSGTKTGT) are compositionally biased toward low complexity. Repeat 26 spans residues 82–83 (GT). One copy of the 27; approximate repeat lies at 84–85 (NS). Repeat unit 28 spans residues 86–87 (GT). Polar residues predominate over residues 105–114 (VTLTESLLNK).

In terms of assembly, forms a heterodimer with timeless (TIM); the complex then translocates into the nucleus. In terms of processing, phosphorylated with a circadian rhythmicity, probably by the double-time protein (dbt). Phosphorylation could be implicated in the stability of per monomer and in the formation of heterodimer per-tim.

The protein resides in the nucleus. Its subcellular location is the cytoplasm. The protein localises to the perinuclear region. Its function is as follows. Essential for biological clock functions. Determines the period length of circadian and ultradian rhythms; an increase in PER dosage leads to shortened circadian rhythms and a decrease leads to lengthened circadian rhythms. Essential for the circadian rhythmicity of locomotor activity, eclosion behavior, and for the rhythmic component of the male courtship song that originates in the thoracic nervous system. The biological cycle depends on the rhythmic formation and nuclear localization of the TIM-PER complex. Light induces the degradation of TIM, which promotes elimination of PER. Nuclear activity of the heterodimer coordinatively regulates PER and TIM transcription through a negative feedback loop. Behaves as a negative element in circadian transcriptional loop. Does not appear to bind DNA, suggesting indirect transcriptional inhibition. The polypeptide is Period circadian protein (per) (Drosophila orena (Fruit fly)).